The following is a 329-amino-acid chain: CDP-diacylglycerol--glycerol-3-phosphate 3-phosphatidyltransferase 1, chloroplastic (329 aa).

The N-terminal 38 residues, 1–38, are a transit peptide targeting the chloroplast; the sequence is MAFLKTLNPLLRRSPTPIPNPRSLLSLDAFLAASSPTA. Helical transmembrane passes span 150-170, 190-210, 217-237, and 300-320; these read PVIG…TLAL, VFGS…VAIA, LHPG…GGAV, and ITVL…GYGI.

It belongs to the CDP-alcohol phosphatidyltransferase class-I family. The cofactor is Mn(2+).

The protein resides in the plastid. It localises to the chloroplast membrane. It carries out the reaction a CDP-1,2-diacyl-sn-glycerol + sn-glycerol 3-phosphate = a 1,2-diacyl-sn-glycero-3-phospho-(1'-sn-glycero-3'-phosphate) + CMP + H(+). The protein operates within phospholipid metabolism; phosphatidylglycerol biosynthesis; phosphatidylglycerol from CDP-diacylglycerol: step 1/2. Catalyzes the committed step to the synthesis of the acidic phospholipids. Transfers specifically a phosphatidyl group from CDP-diacylglycerol to glycerol-3-phosphate to form phosphatidylglycerophosphate. The sequence is that of CDP-diacylglycerol--glycerol-3-phosphate 3-phosphatidyltransferase 1, chloroplastic from Oryza sativa subsp. japonica (Rice).